Consider the following 467-residue polypeptide: Putative gluconeogenesis factor (467 aa).

Residues methionine 1–serine 12 are compositionally biased toward pro residues. A disordered region spans residues methionine 1–arginine 27.

Belongs to the gluconeogenesis factor family.

The protein resides in the cytoplasm. Functionally, required for morphogenesis under gluconeogenic growth conditions. This chain is Putative gluconeogenesis factor, found in Deinococcus radiodurans (strain ATCC 13939 / DSM 20539 / JCM 16871 / CCUG 27074 / LMG 4051 / NBRC 15346 / NCIMB 9279 / VKM B-1422 / R1).